The primary structure comprises 128 residues: Fluoride-specific ion channel FluC (128 aa).

4 helical membrane-spanning segments follow: residues 5 to 25 (IVAI…LGLA), 35 to 55 (LGTL…AVVF), 67 to 87 (LFVI…SVEV), and 96 to 116 (FGWA…LTAL). The Na(+) site is built by glycine 75 and threonine 78.

It belongs to the fluoride channel Fluc/FEX (TC 1.A.43) family.

It is found in the cell inner membrane. The catalysed reaction is fluoride(in) = fluoride(out). Na(+) is not transported, but it plays an essential structural role and its presence is essential for fluoride channel function. Functionally, fluoride-specific ion channel. Important for reducing fluoride concentration in the cell, thus reducing its toxicity. In Burkholderia vietnamiensis (strain G4 / LMG 22486) (Burkholderia cepacia (strain R1808)), this protein is Fluoride-specific ion channel FluC.